A 212-amino-acid polypeptide reads, in one-letter code: Pyridoxine/pyridoxamine 5'-phosphate oxidase (212 aa).

Substrate is bound by residues 8-11 (RREY) and Lys-66. FMN is bound by residues 61-66 (RIVLLK), 76-77 (FT), Arg-82, Lys-83, and Gln-105. Positions 123, 127, and 131 each coordinate substrate. FMN contacts are provided by residues 140-141 (QS) and Trp-185. 191–193 (RLH) contributes to the substrate binding site. Residue Arg-195 participates in FMN binding.

Belongs to the pyridoxamine 5'-phosphate oxidase family. In terms of assembly, homodimer. The cofactor is FMN.

The catalysed reaction is pyridoxamine 5'-phosphate + O2 + H2O = pyridoxal 5'-phosphate + H2O2 + NH4(+). It catalyses the reaction pyridoxine 5'-phosphate + O2 = pyridoxal 5'-phosphate + H2O2. Its pathway is cofactor metabolism; pyridoxal 5'-phosphate salvage; pyridoxal 5'-phosphate from pyridoxamine 5'-phosphate: step 1/1. The protein operates within cofactor metabolism; pyridoxal 5'-phosphate salvage; pyridoxal 5'-phosphate from pyridoxine 5'-phosphate: step 1/1. Catalyzes the oxidation of either pyridoxine 5'-phosphate (PNP) or pyridoxamine 5'-phosphate (PMP) into pyridoxal 5'-phosphate (PLP). This is Pyridoxine/pyridoxamine 5'-phosphate oxidase from Shewanella sp. (strain W3-18-1).